A 475-amino-acid polypeptide reads, in one-letter code: Protein FAM161A (475 aa).

The segment at 53–107 (ISDSSSSSASEKSCSHPALSVTSLSEPDLDGSSSLSTTTDEGLPDLEEKTPGESS) is disordered. Composition is skewed to low complexity over residues 54–64 (SDSSSSSASEK) and 82–93 (DGSSSLSTTTDE). Residues 162 to 234 (VREQNRREKA…RERNRAALLA (73 aa)) adopt a coiled-coil conformation. The required for interaction with CFAP418 stretch occupies residues 255 to 434 (KLRDLFRAKR…PTASSRGREQ (180 aa)). Positions 314 to 337 (RSACRRFRDPRSPAKPRGKHRRRC) are disordered. Positions 327–337 (AKPRGKHRRRC) are enriched in basic residues. A Glycyl lysine isopeptide (Lys-Gly) (interchain with G-Cter in SUMO2) cross-link involves residue lysine 377. The interval 389-441 (EEILRETRRPGRSPRRKSPGRSSNPKPRPHECSPPMPTASSRGREQAIRRSEK) is disordered. Basic residues predominate over residues 398–407 (PGRSPRRKSP). Residues 430–441 (RGREQAIRRSEK) are compositionally biased toward basic and acidic residues.

The protein belongs to the FAM161 family. In terms of assembly, interacts (via central region) with CFAP418 (via N-terminus); the interaction is direct. Interacts (via C-terminus) with microtubules. Interacts with LCA5. Interacts with CEP290. Interacts with SDCCAG8. Interacts with FAM161B. Interacts with POC1B. Interacts with CEP78. Forms a microtubule-associated complex with POC5, CETN2 and POC1B. Interacts with CCDC15. Expressed in the retina.

The protein localises to the cytoplasm. It localises to the cytoskeleton. The protein resides in the cilium basal body. Its subcellular location is the cell projection. It is found in the cilium. The protein localises to the microtubule organizing center. It localises to the centrosome. The protein resides in the centriole. Functionally, involved in ciliogenesis. This chain is Protein FAM161A, found in Mus musculus (Mouse).